A 217-amino-acid polypeptide reads, in one-letter code: NADPH-dependent 3-demethoxyubiquinone 3-hydroxylase, mitochondrial (217 aa).

2 consecutive repeat copies span residues 49–130 (IIER…SALM) and 131–217 (GKEA…STRV). The tract at residues 49–217 (IIERIIRVDH…KTAIWLSTRV (169 aa)) is 2 X approximate tandem repeats. Position 52 (Arg52) interacts with NADH. Fe cation-binding residues include Glu61, Glu91, His94, Glu143, Glu178, and His181. NADH is bound at residue Arg216.

The protein belongs to the COQ7 family. In terms of assembly, component of a multi-subunit COQ enzyme complex. Fe cation serves as cofactor.

The protein resides in the mitochondrion inner membrane. The catalysed reaction is a 5-methoxy-2-methyl-3-(all-trans-polyprenyl)benzoquinone + NADH + O2 = a 3-demethylubiquinone + NAD(+) + H2O. It participates in cofactor biosynthesis; ubiquinone biosynthesis. Its function is as follows. Catalyzes the hydroxylation of the 5-methoxy-2-methyl-3-(all-trans-polyprenyl)benzoquinone at the C6 position and participates in the biosynthesis of ubiquinone. Catalyzes the reaction through a substrate-mediated reduction pathway, whereby NADH shuttles electrons to 5-methoxy-2-methyl-3-(all-trans-decaprenyl)benzoquinone, which then transfers the electrons to the two Fe(3+) centers. The binding of 5-methoxy-2-methyl-3-(all-trans-polyprenyl)benzoquinone (DMQn) mediates reduction of the diiron center by nicotinamide adenine dinucleotide (NADH) and initiates oxygen activation for subsequent DMQ hydroxylation. Also has a structural role in the COQ enzyme complex, stabilizing other COQ polypeptides. The chain is NADPH-dependent 3-demethoxyubiquinone 3-hydroxylase, mitochondrial from Dictyostelium discoideum (Social amoeba).